The following is a 230-amino-acid chain: Phosphoribosylformylglycinamidine synthase subunit PurQ (230 aa).

Residues 3–230 (SAIIVFPGTN…LFQSIVESLS (228 aa)) enclose the Glutamine amidotransferase type-1 domain. The active-site Nucleophile is Cys87. Residues His204 and Glu206 contribute to the active site.

In terms of assembly, part of the FGAM synthase complex composed of 1 PurL, 1 PurQ and 2 PurS subunits.

The protein resides in the cytoplasm. It catalyses the reaction N(2)-formyl-N(1)-(5-phospho-beta-D-ribosyl)glycinamide + L-glutamine + ATP + H2O = 2-formamido-N(1)-(5-O-phospho-beta-D-ribosyl)acetamidine + L-glutamate + ADP + phosphate + H(+). The enzyme catalyses L-glutamine + H2O = L-glutamate + NH4(+). The protein operates within purine metabolism; IMP biosynthesis via de novo pathway; 5-amino-1-(5-phospho-D-ribosyl)imidazole from N(2)-formyl-N(1)-(5-phospho-D-ribosyl)glycinamide: step 1/2. Its function is as follows. Part of the phosphoribosylformylglycinamidine synthase complex involved in the purines biosynthetic pathway. Catalyzes the ATP-dependent conversion of formylglycinamide ribonucleotide (FGAR) and glutamine to yield formylglycinamidine ribonucleotide (FGAM) and glutamate. The FGAM synthase complex is composed of three subunits. PurQ produces an ammonia molecule by converting glutamine to glutamate. PurL transfers the ammonia molecule to FGAR to form FGAM in an ATP-dependent manner. PurS interacts with PurQ and PurL and is thought to assist in the transfer of the ammonia molecule from PurQ to PurL. This is Phosphoribosylformylglycinamidine synthase subunit PurQ from Rhodospirillum rubrum (strain ATCC 11170 / ATH 1.1.1 / DSM 467 / LMG 4362 / NCIMB 8255 / S1).